The sequence spans 475 residues: AP-1 complex subunit mu-1-I (475 aa).

Positions 175 to 473 (KNEAFLDIVE…TQSGDDYTIR (299 aa)) constitute an MHD domain. Residues 240 to 262 (ASATTSDNNTETDKKPSITSSSA) are disordered.

This sequence belongs to the adaptor complexes medium subunit family. As to quaternary structure, adaptor protein complex 1 (AP-1) is a heterotetramer composed of two large adaptins (gamma-type subunit APL4 and beta-type subunit APL2), a medium adaptin (mu-type subunit APM1) and a small adaptin (sigma-type subunit APS1). AP-1 interacts with clathrin.

The protein localises to the cytoplasmic vesicle. It localises to the clathrin-coated vesicle membrane. Its subcellular location is the membrane. It is found in the clathrin-coated pit. Functionally, component of the adaptor complexes which link clathrin to receptors in coated vesicles. Clathrin-associated protein complexes are believed to interact with the cytoplasmic tails of membrane proteins, leading to their selection and concentration. The AP-1 complex interacts directly with clathrin. AP57 is probably a subunit of the Golgi membrane adaptor. This chain is AP-1 complex subunit mu-1-I (APM1), found in Saccharomyces cerevisiae (strain ATCC 204508 / S288c) (Baker's yeast).